The sequence spans 207 residues: Thiamine-phosphate synthase (207 aa).

Residues 38-42 (QYRAK) and Asn70 each bind 4-amino-2-methyl-5-(diphosphooxymethyl)pyrimidine. Positions 71 and 90 each coordinate Mg(2+). Residue Thr109 coordinates 4-amino-2-methyl-5-(diphosphooxymethyl)pyrimidine. 135 to 137 (TNS) lines the 2-[(2R,5Z)-2-carboxy-4-methylthiazol-5(2H)-ylidene]ethyl phosphate pocket. 4-amino-2-methyl-5-(diphosphooxymethyl)pyrimidine is bound at residue Lys138. 2-[(2R,5Z)-2-carboxy-4-methylthiazol-5(2H)-ylidene]ethyl phosphate contacts are provided by residues Gly165 and 185 to 186 (IS).

Belongs to the thiamine-phosphate synthase family. It depends on Mg(2+) as a cofactor.

The enzyme catalyses 2-[(2R,5Z)-2-carboxy-4-methylthiazol-5(2H)-ylidene]ethyl phosphate + 4-amino-2-methyl-5-(diphosphooxymethyl)pyrimidine + 2 H(+) = thiamine phosphate + CO2 + diphosphate. It catalyses the reaction 2-(2-carboxy-4-methylthiazol-5-yl)ethyl phosphate + 4-amino-2-methyl-5-(diphosphooxymethyl)pyrimidine + 2 H(+) = thiamine phosphate + CO2 + diphosphate. It carries out the reaction 4-methyl-5-(2-phosphooxyethyl)-thiazole + 4-amino-2-methyl-5-(diphosphooxymethyl)pyrimidine + H(+) = thiamine phosphate + diphosphate. It participates in cofactor biosynthesis; thiamine diphosphate biosynthesis; thiamine phosphate from 4-amino-2-methyl-5-diphosphomethylpyrimidine and 4-methyl-5-(2-phosphoethyl)-thiazole: step 1/1. Condenses 4-methyl-5-(beta-hydroxyethyl)thiazole monophosphate (THZ-P) and 2-methyl-4-amino-5-hydroxymethyl pyrimidine pyrophosphate (HMP-PP) to form thiamine monophosphate (TMP). This chain is Thiamine-phosphate synthase, found in Clostridium perfringens (strain 13 / Type A).